A 202-amino-acid polypeptide reads, in one-letter code: Stress enhanced protein 2, chloroplastic (202 aa).

The transit peptide at 1–60 directs the protein to the chloroplast; it reads MAMATRAIRYQLPSPRFRAPRCESSEPIKQIQIQQRPRGGDLAENGKIVLQPRLCTLRSY. The next 2 helical transmembrane spans lie at 111-131 and 142-162; these read LAMI…NSLF and AIGA…LTIS.

This sequence belongs to the ELIP/psbS family.

The protein resides in the plastid. It localises to the chloroplast thylakoid membrane. May be involved in non-photochemical quenching, a process that maintains the balance between dissipation and utilization of light energy to minimize generation of oxidizing molecules, thereby protecting the plant against photo-oxidative damage. May play a photoprotective role in the thylakoid membrane in response to light stress. The chain is Stress enhanced protein 2, chloroplastic from Arabidopsis thaliana (Mouse-ear cress).